Here is a 348-residue protein sequence, read N- to C-terminus: Phosphate acyltransferase (348 aa).

This sequence belongs to the PlsX family. Homodimer. Probably interacts with PlsY.

The protein resides in the cytoplasm. It catalyses the reaction a fatty acyl-[ACP] + phosphate = an acyl phosphate + holo-[ACP]. It functions in the pathway lipid metabolism; phospholipid metabolism. Catalyzes the reversible formation of acyl-phosphate (acyl-PO(4)) from acyl-[acyl-carrier-protein] (acyl-ACP). This enzyme utilizes acyl-ACP as fatty acyl donor, but not acyl-CoA. This is Phosphate acyltransferase from Lactiplantibacillus plantarum (strain ATCC BAA-793 / NCIMB 8826 / WCFS1) (Lactobacillus plantarum).